Consider the following 280-residue polypeptide: Coiled-coil domain-containing protein 106 (280 aa).

The stretch at 63–101 (TQLHMALERNSWLQKRIEDLEEERDFLRCQLDKFISSAR) forms a coiled coil. Positions 103 to 121 (EAEDHCRMKPGPRRMEGDS) are enriched in basic and acidic residues. The tract at residues 103–176 (EAEDHCRMKP…KPKARERQRV (74 aa)) is disordered. S130 bears the Phosphoserine mark. The segment covering 133 to 146 (ESAASSLSGASEEG) has biased composition (low complexity). Positions 151–164 (RRRQKQKGGASRRR) match the Bipartite nuclear localization signal motif. Basic residues predominate over residues 152 to 168 (RRQKQKGGASRRRFGKP).

In terms of assembly, interacts with p53/TP53.

The protein resides in the nucleus. Promotes the degradation of p53/TP53 protein and inhibits its transactivity. The polypeptide is Coiled-coil domain-containing protein 106 (CCDC106) (Homo sapiens (Human)).